Consider the following 93-residue polypeptide: UPF0358 protein BLi01701/BL02974 (93 aa).

Belongs to the UPF0358 family.

This chain is UPF0358 protein BLi01701/BL02974, found in Bacillus licheniformis (strain ATCC 14580 / DSM 13 / JCM 2505 / CCUG 7422 / NBRC 12200 / NCIMB 9375 / NCTC 10341 / NRRL NRS-1264 / Gibson 46).